A 513-amino-acid polypeptide reads, in one-letter code: Histidine ammonia-lyase (513 aa).

A cross-link (5-imidazolinone (Ala-Gly)) is located at residues A144 to G146. S145 carries the 2,3-didehydroalanine (Ser) modification.

It belongs to the PAL/histidase family. In terms of processing, contains an active site 4-methylidene-imidazol-5-one (MIO), which is formed autocatalytically by cyclization and dehydration of residues Ala-Ser-Gly.

It localises to the cytoplasm. The catalysed reaction is L-histidine = trans-urocanate + NH4(+). The protein operates within amino-acid degradation; L-histidine degradation into L-glutamate; N-formimidoyl-L-glutamate from L-histidine: step 1/3. This chain is Histidine ammonia-lyase, found in Streptococcus sanguinis (strain SK36).